A 216-amino-acid polypeptide reads, in one-letter code: Probable nicotinate-nucleotide adenylyltransferase (216 aa).

It belongs to the NadD family.

It catalyses the reaction nicotinate beta-D-ribonucleotide + ATP + H(+) = deamido-NAD(+) + diphosphate. Its pathway is cofactor biosynthesis; NAD(+) biosynthesis; deamido-NAD(+) from nicotinate D-ribonucleotide: step 1/1. In terms of biological role, catalyzes the reversible adenylation of nicotinate mononucleotide (NaMN) to nicotinic acid adenine dinucleotide (NaAD). The protein is Probable nicotinate-nucleotide adenylyltransferase of Klebsiella pneumoniae subsp. pneumoniae (strain ATCC 700721 / MGH 78578).